Reading from the N-terminus, the 1408-residue chain is DNA-directed RNA polymerase subunit beta'' (1408 aa).

It belongs to the RNA polymerase beta' chain family. RpoC2 subfamily. As to quaternary structure, in plastids the minimal PEP RNA polymerase catalytic core is composed of four subunits: alpha, beta, beta', and beta''. When a (nuclear-encoded) sigma factor is associated with the core the holoenzyme is formed, which can initiate transcription.

It localises to the plastid. The protein localises to the chloroplast. It catalyses the reaction RNA(n) + a ribonucleoside 5'-triphosphate = RNA(n+1) + diphosphate. Its function is as follows. DNA-dependent RNA polymerase catalyzes the transcription of DNA into RNA using the four ribonucleoside triphosphates as substrates. This chain is DNA-directed RNA polymerase subunit beta'', found in Psilotum nudum (Whisk fern).